Here is a 358-residue protein sequence, read N- to C-terminus: Bis(monoacylglycero)phosphate synthase CLN5 (358 aa).

Over 1–23 the chain is Cytoplasmic; the sequence is MAQEVDTAQGAEMRRGAGAARGR. A helical; Signal-anchor for type II membrane protein transmembrane segment spans residues 24-40; the sequence is ASWCWALALLWLAVVPG. At 41-358 the chain is on the lumenal side; the sequence is WSRVSGIPSR…PIRNKTLSGL (318 aa). Cystine bridges form between Cys-70–Cys-159 and Cys-77–Cys-165. His-117 functions as the Proton acceptor in the catalytic mechanism. Residues Asn-130, Asn-143, Asn-178, and Asn-203 are each glycosylated (N-linked (GlcNAc...) asparagine). The active-site Nucleophile; Acyl-thioester intermediate is the Cys-231. Asn-255, Asn-271, and Asn-281 each carry an N-linked (GlcNAc...) asparagine glycan. Residues 304 to 343 form a membrane-anchoring region; it reads FLLSLLQIFDAVIVHKQFYLFYNFEYWFLPMKFPFIKITY. Asn-352 carries N-linked (GlcNAc...) asparagine glycosylation.

This sequence belongs to the CLN5 family. As to quaternary structure, multimer. Interacts with SORT1, RAB5A and RAB7A. Interacts with PPT1, TPP1, CLN3, CLN6, CLN8, ATP5F1A and ATP5F1B. In terms of processing, N-glycosylated with both high mannose and complex type sugars. Glycosylation is important for proper folding and trafficking to the lysosomes. The type II membrane signal anchor is proteolytically cleaved to produce a mature form that is transported to the lysosomes (Bis(monoacylglycero)phosphate synthase CLN5, secreted form). Post-translationally, can undergo proteolytic cleavage at the C-terminus, probably by a cysteine protease and may involve the removal of approximately 10-15 residues from the C-terminal end. In terms of tissue distribution, ubiquitous.

It localises to the lysosome. Its subcellular location is the membrane. It carries out the reaction S-hexadecanoyl-L-cysteinyl-[protein] + H2O = L-cysteinyl-[protein] + hexadecanoate + H(+). The enzyme catalyses 2 1-acyl-sn-glycero-3-phospho-(1'-sn-glycerol) = 1-acyl-sn-glycero-3-phospho-(3'-acyl-sn-1'-glycerol) + sn-glycero-3-phospho-(1'-sn-glycerol). The catalysed reaction is 2 1-(9Z-octadecenoyl)-sn-glycero-3-phospho-(1'-sn-glycerol) = 1-(9Z-octadecenoyl)-sn-glycero-3-phospho-(3'-(9Z-octadecenoyl)-1'-sn-glycerol) + sn-glycero-3-phospho-(1'-sn-glycerol). It catalyses the reaction 2 1-octadecanoyl-sn-glycero-3-phospho-(1'-sn-glycerol) = 1-octadecanoyl-sn-glycero-3-phospho-(3'-octadecanoyl-1'-sn-glycerol) + sn-glycero-3-phospho-(1'-sn-glycerol). It carries out the reaction 2 1-hexadecanoyl-sn-glycero-3-phospho-(1'-sn-glycerol) = 1-hexadecanoyl-sn-glycero-3-phospho-(3'-hexadecanoyl-1'-sn-glycerol) + sn-glycero-3-phospho-(1'-sn-glycerol). The enzyme catalyses 2 1-tetradecanoyl-sn-glycero-3-phospho-(1'-sn-glycerol) = 1-tetradecanoyl-sn-glycero-3-phospho-(3'-tetradecanoyl-1'-sn-glycerol) + sn-glycero-3-phospho-(1'-sn-glycerol). Its activity is regulated as follows. Anionic phospholipids activate bis(monoacylglycero)phosphate (BMP) synthase activity. Amiodarone, a cationic amphiphilic drug inhibits BMP synthase activity towards liposomal lysophosphatidylglycerol. Palmostatin B inhibits palmitoyl protein thioesterase activity. Catalyzes the synthesis of bis(monoacylglycero)phosphate (BMP) via transacylation of 2 molecules of lysophosphatidylglycerol (LPG). BMP also known as lysobisphosphatidic acid plays a key role in the formation of intraluminal vesicles and in maintaining intracellular cholesterol homeostasis. Can use only LPG as the exclusive lysophospholipid acyl donor for base exchange and displays BMP synthase activity towards various LPGs (LPG 14:0, LPG 16:0, LPG 18:0, LPG 18:1) with a higher preference for longer chain lengths. Plays a role in influencing the retrograde trafficking of lysosomal sorting receptors SORT1 and IGF2R from the endosomes to the trans-Golgi network by controlling the recruitment of retromer complex to the endosomal membrane. Regulates the localization and activation of RAB7A which is required to recruit the retromer complex to the endosomal membrane. In terms of biological role, exhibits palmitoyl protein thioesterase (S-depalmitoylation) activity in vitro and most likely plays a role in protein S-depalmitoylation. In Homo sapiens (Human), this protein is Bis(monoacylglycero)phosphate synthase CLN5 (CLN5).